The sequence spans 423 residues: Imidazolonepropionase (423 aa).

Residues H78 and H80 each coordinate Fe(3+). The Zn(2+) site is built by H78 and H80. The 4-imidazolone-5-propanoate site is built by R87, Y150, and H183. Y150 contacts N-formimidoyl-L-glutamate. H247 contacts Fe(3+). Zn(2+) is bound at residue H247. Residue E250 coordinates 4-imidazolone-5-propanoate. Position 322 (D322) interacts with Fe(3+). D322 is a binding site for Zn(2+). N-formimidoyl-L-glutamate-binding residues include N324 and G326. Position 327 (S327) interacts with 4-imidazolone-5-propanoate.

The protein belongs to the metallo-dependent hydrolases superfamily. HutI family. Zn(2+) serves as cofactor. It depends on Fe(3+) as a cofactor.

The protein localises to the cytoplasm. The enzyme catalyses 4-imidazolone-5-propanoate + H2O = N-formimidoyl-L-glutamate. It participates in amino-acid degradation; L-histidine degradation into L-glutamate; N-formimidoyl-L-glutamate from L-histidine: step 3/3. Functionally, catalyzes the hydrolytic cleavage of the carbon-nitrogen bond in imidazolone-5-propanoate to yield N-formimidoyl-L-glutamate. It is the third step in the universal histidine degradation pathway. The protein is Imidazolonepropionase of Bacillus cereus (strain ZK / E33L).